The primary structure comprises 445 residues: MSNRNLRSSTNSEFSEGQHQTPSSDSSGHGEDQPQASPGPNKKSHTPKKNISKGAVLHEKPMTVMVLTATEPFNYKEGKENMFHATVATESQYYRVKVFNMDLKEKFTENKFITISKYFNSSGILEINETATVSEAAPNQIIEVPKNIIRSAKETLKISKIKELDSGTLIYGVFAVEKKKVNDKSITFKIKDNEDNIKVVWDKKQHNINYEKGDKLQLFSFHLRKGNGKPILHSGNHSFIKGEKLLKESFEGDGYHKGPKQVVALKATKLFTYDSIKSKKMFHATVATDTEFFRVMVFEENLEKKFIPGNTIALSDYFGMYGSLAIHEYSSVSEVKSQNKEDSSSSDERLIEHLKICDLHLQTKERLVDGEFKVYRKSTGNNCICYGIWDDTGAMKVVVSGQLTSVNCEIGNTIRLVCFELTSNADEWFLRSTRYSYMEVIMPEK.

Positions 1–27 (MSNRNLRSSTNSEFSEGQHQTPSSDSS) are enriched in polar residues. The interval 1–57 (MSNRNLRSSTNSEFSEGQHQTPSSDSSGHGEDQPQASPGPNKKSHTPKKNISKGAVL) is disordered. The span at 42 to 51 (KKSHTPKKNI) shows a compositional bias: basic residues. 2 consecutive HIN-200 domains span residues 46 to 243 (TPKK…IKGE) and 244 to 441 (KLLK…MEVI). 2 required for homomultimerization regions span residues 82–89 (MFHATVAT) and 281–288 (MFHATVAT).

It belongs to the HIN-200 family. As to quaternary structure, homomultimer; homotetramerizes (via HIN-200 domain 2), enhancing affinity for double-stranded DNA (dsDNA). Interacts (via HIN-200 domain 2) with AIM2 (via HIN-200 domain); preventing activation of the AIM2 inflammasome. Binds to several transcription factors, including NF-kappa-B p50 (NFKB1) and p65 (RELA), FOS, JUN, E2F1, E2F4, MYOD1 and myogenin. Also binds TP53/p53, the hypophosphorylated, growth-inhibitory form of the retinoblastoma protein and the p53-binding protein 1 (TP53BP1). Phosphorylated.

It localises to the cytoplasm. Its subcellular location is the nucleus. DNA-binding protein involved in innate immune response and has anti-inflammatory activity. Inhibits caspase activation in response to cytosolic DNA by preventing activation of the AIM2 inflammasome, probably by sequestering cytoplasmic DNA and preventing its being bound by AIM2. Also inhibits activation of the AIM2 inflammasome via a direct interaction with AIM2, which prevents the interaction between AIM2 and PYCARD and formation of the AIM2 inflammasome. Binds double-stranded DNA (dsDNA) in the cytosol. Has anti-apoptotic effects due to inhibition of the transcriptional activity of TP53/p53. Inhibits the transcriptional activity of several transcription factors, including NF-kappa-B p50 and p65, FOS, JUN, E2F1, E2F4, MYOD1 and myogenin. The polypeptide is Interferon-activable protein 202 (Mus musculus (Mouse)).